The primary structure comprises 340 residues: Sulfotransferase ppzF (340 aa).

It functions in the pathway secondary metabolite biosynthesis. Functionally, sulfotransferase; part of the gene cluster that mediates the biosynthesis of pyrrolopyrazines, secondary metabolites showing insecticidal activity. The role of ppzF within the pathway has still to be determined. The single multifunctional NRPS ppzA is sufficient to produce peramine via condensation of 1-pyrroline-5-carboxylate and arginine, N-methylation of the alpha-amino group of arginine and reduction of the thioester and the cyclization to form an iminium ion resulting in release from the peptide synthetase. Deprotonation of this intermediate and oxidation of the pyrroline ring would give rise to peramine. In Epichloe species that produce only peramine, the peramine synthetase gene is not localized in a gene cluster, in contrast to Metarhizium species that contain additional pyrrolopyrazine biosynthesis genes. The 2-oxoglutarate-Fe(II) type oxidoreductase ppzC hydroxylates peramine to yield the newly identified compound 8-hydroxyperamine whereas ppzD converts L-proline into trans-4-hydroxy-L-proline, a precursor of peramine biosynthesis. The polypeptide is Sulfotransferase ppzF (Metarhizium rileyi (strain RCEF 4871) (Nomuraea rileyi)).